We begin with the raw amino-acid sequence, 238 residues long: Proteasome subunit beta type-6 (238 aa).

Ala-2 carries the N-acetylalanine modification. Positions 2-33 (AAALAVRRAGSAPAFGPEALTPDWENREVSTG) are cleaved as a propeptide — removed in mature form. Thr-34 functions as the Nucleophile in the catalytic mechanism. A Phosphothreonine modification is found at Thr-68.

It belongs to the peptidase T1B family. The 26S proteasome consists of a 20S proteasome core and two 19S regulatory subunits. The 20S proteasome core is a barrel-shaped complex made of 28 subunits that are arranged in four stacked rings. The two outer rings are each formed by seven alpha subunits, and the two inner rings are formed by seven beta subunits. The proteolytic activity is exerted by three beta-subunits PSMB5, PSMB6 and PSMB7.

The protein resides in the cytoplasm. Its subcellular location is the nucleus. It carries out the reaction Cleavage of peptide bonds with very broad specificity.. Functionally, component of the 20S core proteasome complex involved in the proteolytic degradation of most intracellular proteins. This complex plays numerous essential roles within the cell by associating with different regulatory particles. Associated with two 19S regulatory particles, forms the 26S proteasome and thus participates in the ATP-dependent degradation of ubiquitinated proteins. The 26S proteasome plays a key role in the maintenance of protein homeostasis by removing misfolded or damaged proteins that could impair cellular functions, and by removing proteins whose functions are no longer required. Associated with the PA200 or PA28, the 20S proteasome mediates ubiquitin-independent protein degradation. This type of proteolysis is required in several pathways including spermatogenesis (20S-PA200 complex) or generation of a subset of MHC class I-presented antigenic peptides (20S-PA28 complex). Within the 20S core complex, PSMB6 displays a peptidylglutamyl-hydrolyzing activity also termed postacidic or caspase-like activity, meaning that the peptides bond hydrolysis occurs directly after acidic residues. The polypeptide is Proteasome subunit beta type-6 (Psmb6) (Mus musculus (Mouse)).